Reading from the N-terminus, the 480-residue chain is Zinc finger protein ztf-6 (480 aa).

Disordered stretches follow at residues 92-160 (CHDS…TMMV), 174-198 (GTNG…EEHD), 282-307 (LDAG…PTAS), and 328-351 (DANT…MKVP). Low complexity-rich tracts occupy residues 95 to 105 (SATSTTTTVSH), 131 to 145 (SSIE…SSSV), 174 to 187 (GTNG…TSSS), and 286 to 296 (SSENDGSTSSS). C2H2-type zinc fingers lie at residues 359 to 383 (YICP…FVTH) and 388 to 410 (FNCD…QKIH). The C2H2-type 3; degenerate zinc finger occupies 416 to 441 (YQCRGCGTNYTTQNGLRLHRQRNPAC). A disordered region spans residues 461–480 (ALSGPLSKNSSPTKQMVSAP).

Probable transcription factor, involved in regulation of dopamine neuron lineage specification. May play a role in maintaining robustness of the Wnt/beta-catenin asymmetry pathway. This Caenorhabditis elegans protein is Zinc finger protein ztf-6.